The chain runs to 368 residues: Homoserine O-acetyltransferase (368 aa).

Residues 47–349 form the AB hydrolase-1 domain; it reads NAILICHALS…SGEGHDSFLL (303 aa). S153 functions as the Nucleophile in the catalytic mechanism. Substrate is bound at residue R221. Residues D311 and H344 contribute to the active site. A substrate-binding site is contributed by D345.

Belongs to the AB hydrolase superfamily. MetX family. As to quaternary structure, homodimer.

It localises to the cytoplasm. It catalyses the reaction L-homoserine + acetyl-CoA = O-acetyl-L-homoserine + CoA. It functions in the pathway amino-acid biosynthesis; L-methionine biosynthesis via de novo pathway; O-acetyl-L-homoserine from L-homoserine: step 1/1. Its function is as follows. Transfers an acetyl group from acetyl-CoA to L-homoserine, forming acetyl-L-homoserine. This chain is Homoserine O-acetyltransferase, found in Leptospira borgpetersenii serovar Hardjo-bovis (strain JB197).